A 373-amino-acid polypeptide reads, in one-letter code: Malate dehydrogenase, mitochondrial (373 aa).

NAD(+) is bound by residues 69 to 75 (GAAGGIG) and D95. Substrate is bound by residues R141 and R147. Residues N154 and 177–179 (ISN) contribute to the NAD(+) site. Substrate-binding residues include N179 and R213. The active-site Proton acceptor is H237. An NAD(+)-binding site is contributed by M288.

Belongs to the LDH/MDH superfamily. MDH type 1 family. Homodimer.

The protein localises to the mitochondrion matrix. The enzyme catalyses (S)-malate + NAD(+) = oxaloacetate + NADH + H(+). The protein is Malate dehydrogenase, mitochondrial of Chlamydomonas reinhardtii (Chlamydomonas smithii).